We begin with the raw amino-acid sequence, 436 residues long: Histidinol dehydrogenase (436 aa).

Residues Tyr135, Gln196, and Asn219 each coordinate NAD(+). Residues Ser242, Gln264, and His267 each contribute to the substrate site. 2 residues coordinate Zn(2+): Gln264 and His267. Catalysis depends on proton acceptor residues Glu332 and His333. 4 residues coordinate substrate: His333, Asp366, Glu420, and His425. A Zn(2+)-binding site is contributed by Asp366. Residue His425 coordinates Zn(2+).

Belongs to the histidinol dehydrogenase family. It depends on Zn(2+) as a cofactor.

The enzyme catalyses L-histidinol + 2 NAD(+) + H2O = L-histidine + 2 NADH + 3 H(+). The protein operates within amino-acid biosynthesis; L-histidine biosynthesis; L-histidine from 5-phospho-alpha-D-ribose 1-diphosphate: step 9/9. Functionally, catalyzes the sequential NAD-dependent oxidations of L-histidinol to L-histidinaldehyde and then to L-histidine. In Methylococcus capsulatus (strain ATCC 33009 / NCIMB 11132 / Bath), this protein is Histidinol dehydrogenase.